A 229-amino-acid chain; its full sequence is Peptidase E (229 aa).

Residues S120, D135, and H157 each act as charge relay system in the active site.

This sequence belongs to the peptidase S51 family.

Its subcellular location is the cytoplasm. The catalysed reaction is Dipeptidase E catalyzes the hydrolysis of dipeptides Asp-|-Xaa. It does not act on peptides with N-terminal Glu, Asn or Gln, nor does it cleave isoaspartyl peptides.. Hydrolyzes dipeptides containing N-terminal aspartate residues. May play a role in allowing the cell to use peptide aspartate to spare carbon otherwise required for the synthesis of the aspartate family of amino acids. The sequence is that of Peptidase E from Shigella sonnei (strain Ss046).